Consider the following 121-residue polypeptide: Phosphoribosyl-AMP cyclohydrolase (121 aa).

Residue aspartate 76 coordinates Mg(2+). A Zn(2+)-binding site is contributed by cysteine 77. Positions 78 and 80 each coordinate Mg(2+). Zn(2+) is bound by residues cysteine 93 and cysteine 100.

The protein belongs to the PRA-CH family. As to quaternary structure, homodimer. Mg(2+) is required as a cofactor. Zn(2+) serves as cofactor.

The protein localises to the cytoplasm. The enzyme catalyses 1-(5-phospho-beta-D-ribosyl)-5'-AMP + H2O = 1-(5-phospho-beta-D-ribosyl)-5-[(5-phospho-beta-D-ribosylamino)methylideneamino]imidazole-4-carboxamide. The protein operates within amino-acid biosynthesis; L-histidine biosynthesis; L-histidine from 5-phospho-alpha-D-ribose 1-diphosphate: step 3/9. Functionally, catalyzes the hydrolysis of the adenine ring of phosphoribosyl-AMP. This chain is Phosphoribosyl-AMP cyclohydrolase, found in Paracoccus denitrificans (strain Pd 1222).